A 112-amino-acid polypeptide reads, in one-letter code: Protein Churchill (112 aa).

Zn(2+) is bound by residues cysteine 2, cysteine 5, cysteine 30, cysteine 33, histidine 59, cysteine 61, cysteine 64, histidine 66, histidine 71, cysteine 88, and cysteine 91.

This sequence belongs to the Churchill family.

Its function is as follows. Transcriptional activator that mediates FGF signaling during neural development. Plays a role in the regulation of cell movement. Does not bind DNA by itself. The polypeptide is Protein Churchill (CHURC1) (Bos taurus (Bovine)).